A 476-amino-acid chain; its full sequence is Cobyric acid synthase (476 aa).

In terms of domain architecture, GATase cobBQ-type spans 242 to 428 (AFRVVVPVPP…LHGLFDTPDA (187 aa)). The active-site Nucleophile is C323. Residue H420 is part of the active site.

Belongs to the CobB/CobQ family. CobQ subfamily.

The protein operates within cofactor biosynthesis; adenosylcobalamin biosynthesis. Functionally, catalyzes amidations at positions B, D, E, and G on adenosylcobyrinic A,C-diamide. NH(2) groups are provided by glutamine, and one molecule of ATP is hydrogenolyzed for each amidation. In Janthinobacterium sp. (strain Marseille) (Minibacterium massiliensis), this protein is Cobyric acid synthase.